A 376-amino-acid polypeptide reads, in one-letter code: MWVRTTLRIERWTKEKTEDDTSSWDESSTDINRLPSWGRGHLLASVESSTDASTLSSEGEFKNTDRCCWKHKCAGHIVRPFSPDCVHHDVHLHSLSHCDCDSRLKDCSEKTNSSSGDVGPTCSRDVDSTCFDIIQSPCFELIPEEECVERFWYGWCKSYRPVSVAVIHHPIHHECGADDLNQEEEEEEEEESKPPIPTQVGPTPTDSPTDTGMSMITGAPDSAAPITIWRSESPTGKSQGNRVIKKIKKKKEKDKEEETDEKEKAKVKKKVKKGKLMKKKSPVKSESPPDLSRSLSPRELARMSESSPDSRQDLESEDSYNDPGREEPSSEDIVESSSPRKREKNGVQVKKPGLKTSPVKKINKRRSPPASNPNLS.

Positions 180 to 191 (LNQEEEEEEEEE) are enriched in acidic residues. Positions 180–376 (LNQEEEEEEE…SPPASNPNLS (197 aa)) are disordered. Positions 202–211 (PTPTDSPTDT) are enriched in low complexity. Residues 230–241 (RSESPTGKSQGN) show a composition bias toward polar residues. Residues 243–252 (VIKKIKKKKE) are compositionally biased toward basic residues. Residues 253-264 (KDKEEETDEKEK) are compositionally biased toward basic and acidic residues. Positions 265 to 282 (AKVKKKVKKGKLMKKKSP) are enriched in basic residues. The span at 284–298 (KSESPPDLSRSLSPR) shows a compositional bias: low complexity. A phosphoserine mark is found at serine 319, serine 329, serine 330, serine 367, and serine 376.

Belongs to the PROCA1 family.

This chain is Protein PROCA1 (PROCA1), found in Bos taurus (Bovine).